The following is a 710-amino-acid chain: uncharacterized protein (710 aa).

Coiled coils occupy residues 273 to 298 (LYRQ…MEEG) and 477 to 528 (RYEK…VADT).

This is an uncharacterized protein from Coxiella burnetii (strain RSA 493 / Nine Mile phase I).